The primary structure comprises 89 residues: Small ribosomal subunit protein uS15 (89 aa).

Belongs to the universal ribosomal protein uS15 family. In terms of assembly, part of the 30S ribosomal subunit. Forms a bridge to the 50S subunit in the 70S ribosome, contacting the 23S rRNA.

Functionally, one of the primary rRNA binding proteins, it binds directly to 16S rRNA where it helps nucleate assembly of the platform of the 30S subunit by binding and bridging several RNA helices of the 16S rRNA. In terms of biological role, forms an intersubunit bridge (bridge B4) with the 23S rRNA of the 50S subunit in the ribosome. The polypeptide is Small ribosomal subunit protein uS15 (Haemophilus influenzae (strain 86-028NP)).